A 206-amino-acid chain; its full sequence is FMN-dependent NADH:quinone oxidoreductase (206 aa).

FMN is bound by residues S9, 15-17, and 139-142; these read SVS and SRGG.

This sequence belongs to the azoreductase type 1 family. As to quaternary structure, homodimer. It depends on FMN as a cofactor.

It carries out the reaction 2 a quinone + NADH + H(+) = 2 a 1,4-benzosemiquinone + NAD(+). The enzyme catalyses N,N-dimethyl-1,4-phenylenediamine + anthranilate + 2 NAD(+) = 2-(4-dimethylaminophenyl)diazenylbenzoate + 2 NADH + 2 H(+). Quinone reductase that provides resistance to thiol-specific stress caused by electrophilic quinones. Its function is as follows. Also exhibits azoreductase activity. Catalyzes the reductive cleavage of the azo bond in aromatic azo compounds to the corresponding amines. The chain is FMN-dependent NADH:quinone oxidoreductase from Cupriavidus necator (strain ATCC 17699 / DSM 428 / KCTC 22496 / NCIMB 10442 / H16 / Stanier 337) (Ralstonia eutropha).